Consider the following 167-residue polypeptide: 18.8 kDa class II heat shock protein (167 aa).

Residues 49-167 (DAKAMAATPA…KPKTVEVKVA (119 aa)) enclose the sHSP domain.

Belongs to the small heat shock protein (HSP20) family.

Its subcellular location is the cytoplasm. This chain is 18.8 kDa class II heat shock protein (SHSP-2), found in Ipomoea nil (Japanese morning glory).